Reading from the N-terminus, the 649-residue chain is ABC transporter G family member 5 (649 aa).

In terms of domain architecture, ABC transporter spans 42–284 (VKTEEESLKL…LRSNGLHPPL (243 aa)). 80–87 (GPSGAGKS) contacts ATP. The disordered stretch occupies residues 308 to 336 (SRRAAHVLTPQTTLQEKRSEDSQGESKSG). Positions 371–581 (EETMILTHRF…PFEGFLINEF (211 aa)) constitute an ABC transmembrane type-2 domain. 6 helical membrane-spanning segments follow: residues 390-410 (LFAC…LIFH), 425-445 (LFAF…PIFL), 474-494 (LPFL…LVGL), 506-526 (LLIW…SALV), 529-549 (FIVG…FSGY), and 617-637 (VVIM…ILRC).

Belongs to the ABC transporter superfamily. ABCG family. Eye pigment precursor importer (TC 3.A.1.204) subfamily.

It is found in the membrane. The chain is ABC transporter G family member 5 (ABCG5) from Arabidopsis thaliana (Mouse-ear cress).